The primary structure comprises 367 residues: Histidinol-phosphate aminotransferase (367 aa).

Residue K227 is modified to N6-(pyridoxal phosphate)lysine.

It belongs to the class-II pyridoxal-phosphate-dependent aminotransferase family. Histidinol-phosphate aminotransferase subfamily. As to quaternary structure, homodimer. The cofactor is pyridoxal 5'-phosphate.

It catalyses the reaction L-histidinol phosphate + 2-oxoglutarate = 3-(imidazol-4-yl)-2-oxopropyl phosphate + L-glutamate. It participates in amino-acid biosynthesis; L-histidine biosynthesis; L-histidine from 5-phospho-alpha-D-ribose 1-diphosphate: step 7/9. This is Histidinol-phosphate aminotransferase from Leptospira borgpetersenii serovar Hardjo-bovis (strain JB197).